The primary structure comprises 430 residues: Lipoyl synthase, mitochondrial (430 aa).

Residues 1–29 (MASPVPIQRLQAPLRRSLARAAALSTRSY) constitute a mitochondrion transit peptide. Low complexity predominate over residues 28 to 58 (SYATIPSGPSSQPTSQESSSAASASAPATKP). A disordered region spans residues 28-62 (SYATIPSGPSSQPTSQESSSAASASAPATKPRPTY). [4Fe-4S] cluster contacts are provided by Cys142, Cys147, Cys153, Cys173, Cys177, Cys180, and Ser390. The Radical SAM core domain occupies 156–379 (GSNKAAATAT…RQRALDMGFL (224 aa)).

It belongs to the radical SAM superfamily. Lipoyl synthase family. It depends on [4Fe-4S] cluster as a cofactor.

The protein localises to the mitochondrion. It catalyses the reaction [[Fe-S] cluster scaffold protein carrying a second [4Fe-4S](2+) cluster] + N(6)-octanoyl-L-lysyl-[protein] + 2 oxidized [2Fe-2S]-[ferredoxin] + 2 S-adenosyl-L-methionine + 4 H(+) = [[Fe-S] cluster scaffold protein] + N(6)-[(R)-dihydrolipoyl]-L-lysyl-[protein] + 4 Fe(3+) + 2 hydrogen sulfide + 2 5'-deoxyadenosine + 2 L-methionine + 2 reduced [2Fe-2S]-[ferredoxin]. It participates in protein modification; protein lipoylation via endogenous pathway; protein N(6)-(lipoyl)lysine from octanoyl-[acyl-carrier-protein]: step 2/2. Its function is as follows. Catalyzes the radical-mediated insertion of two sulfur atoms into the C-6 and C-8 positions of the octanoyl moiety bound to the lipoyl domains of lipoate-dependent enzymes, thereby converting the octanoylated domains into lipoylated derivatives. The chain is Lipoyl synthase, mitochondrial from Neurospora crassa (strain ATCC 24698 / 74-OR23-1A / CBS 708.71 / DSM 1257 / FGSC 987).